Reading from the N-terminus, the 794-residue chain is Kinesin-like protein KIN-13A (794 aa).

Positions lysine 193–leucine 526 constitute a Kinesin motor domain. Glycine 282 to threonine 289 provides a ligand contact to ATP. A disordered region spans residues serine 525–threonine 699. Over residues glutamate 569 to serine 579 the composition is skewed to basic and acidic residues. Composition is skewed to polar residues over residues asparagine 580–asparagine 593 and glutamate 611–glutamate 632. Positions glycine 650–serine 668 are enriched in basic and acidic residues. Residues serine 669–glutamine 696 show a composition bias toward polar residues. Positions glutamate 705–valine 742 form a coiled coil.

This sequence belongs to the TRAFAC class myosin-kinesin ATPase superfamily. Kinesin family. KIN-13 subfamily. As to quaternary structure, component of the active ARAC10-IRC5-KIN13A complex. Interacts (via-C-terminus) with ICR2 and ICR5 (via N-terminus). No interactions with ICR1. As to expression, expressed in leaves, roots, young and mature seedlings. Preferentially expressed in the secondary cell wall pits of differentiating metaxylem vessel cells (at the protein level).

It is found in the golgi apparatus. Its subcellular location is the golgi stack. The protein localises to the cytoplasm. The protein resides in the cytoskeleton. Functionally, internal motor kinesin involved in trichome morphogenesis. Participates in regulating the formation of Golgi-associated vesicles. Plays a central role in microtubule disassembly via the active ARAC10-ICR5 cascade, which establishes the secondary cell wall pattern in metaxylem vessel cells. Acts redundantly with KIN13B to modulate cell wall synthesis and cell expansion via the THE1 pathway. In Arabidopsis thaliana (Mouse-ear cress), this protein is Kinesin-like protein KIN-13A.